A 934-amino-acid chain; its full sequence is DNA topoisomerase 1 (934 aa).

Positions 1–20 (MADPKTKGRGSGGNGSGRRL) are disordered. The 125-residue stretch at 18 to 142 (RRLVIVESPT…VKRMVFHEIT (125 aa)) folds into the Toprim domain. Mg(2+)-binding residues include Glu24 and Asp111. The 460-residue stretch at 157–616 (DIDLVDAQET…FYFGGDHGVP (460 aa)) folds into the Topo IA-type catalytic domain. An interaction with DNA region spans residues 191–196 (SAGRVQ). Tyr342 serves as the catalytic O-(5'-phospho-DNA)-tyrosine intermediate. Disordered stretches follow at residues 746-765 (AAQGVKKRQKAAGPKPRTGS), 842-892 (KRRG…KGDD), and 905-934 (LADRRARGPAKRPARKAARKVPAKKAAKRD). Residues 911 to 934 (RGPAKRPARKAARKVPAKKAAKRD) show a composition bias toward basic residues.

This sequence belongs to the type IA topoisomerase family. As to quaternary structure, monomer. The cofactor is Mg(2+).

It carries out the reaction ATP-independent breakage of single-stranded DNA, followed by passage and rejoining.. Releases the supercoiling and torsional tension of DNA, which is introduced during the DNA replication and transcription, by transiently cleaving and rejoining one strand of the DNA duplex. Introduces a single-strand break via transesterification at a target site in duplex DNA. The scissile phosphodiester is attacked by the catalytic tyrosine of the enzyme, resulting in the formation of a DNA-(5'-phosphotyrosyl)-enzyme intermediate and the expulsion of a 3'-OH DNA strand. The free DNA strand then undergoes passage around the unbroken strand, thus removing DNA supercoils. Finally, in the religation step, the DNA 3'-OH attacks the covalent intermediate to expel the active-site tyrosine and restore the DNA phosphodiester backbone. The polypeptide is DNA topoisomerase 1 (Mycobacterium bovis (strain ATCC BAA-935 / AF2122/97)).